Reading from the N-terminus, the 341-residue chain is Very-long-chain 3-oxoacyl-CoA reductase (341 aa).

Residues 15 to 35 (VVTAFSVIGIVFTILKFTSFA) form a helical membrane-spanning segment. The NADP(+) site is built by V61, D115, N142, K177, Y216, K220, V249, and S251. Y216 serves as the catalytic Proton donor. K220 acts as the Lowers pKa of active site Tyr in catalysis.

The protein belongs to the short-chain dehydrogenases/reductases (SDR) family.

The protein localises to the endoplasmic reticulum membrane. The catalysed reaction is a very-long-chain (3R)-3-hydroxyacyl-CoA + NADP(+) = a very-long-chain 3-oxoacyl-CoA + NADPH + H(+). The protein operates within lipid metabolism; fatty acid biosynthesis. Component of the microsomal membrane bound fatty acid elongation system, which produces the 26-carbon very long-chain fatty acids (VLCFA) from palmitate. Catalyzes the reduction of the 3-ketoacyl-CoA intermediate that is formed in each cycle of fatty acid elongation. VLCFAs serve as precursors for ceramide and sphingolipids. In Schizosaccharomyces pombe (strain 972 / ATCC 24843) (Fission yeast), this protein is Very-long-chain 3-oxoacyl-CoA reductase.